Consider the following 175-residue polypeptide: Heme-dependent oxidative N-demethylase delta subunit (175 aa).

In terms of assembly, the heme-dependent oxidative N-demethylase (HODM) is a heterotetramer composed of a catalytic alpha subunit, a FMN/2Fe-2S-dependent oxidoreductase beta subunit, a gamma subunit with putative aminotransferase activity, and a delta subunit of unknown function.

Its function is as follows. Component of the heme-dependent oxidative N-demethylase (HODM) enzyme, that catalyzes the NADPH-dependent oxidation of dimethylamine (DMA) to methylamine (MA) and formaldehyde. Functions in bacterial methylated amine catabolism, linking alkylamine oxidation to the tetrahydrofolate C1 pool. The function of the delta subunit is unknown. This is Heme-dependent oxidative N-demethylase delta subunit from Ectopseudomonas mendocina (strain ymp) (Pseudomonas mendocina).